The following is a 328-amino-acid chain: DNA polymerase III subunit delta' (328 aa).

DNA polymerase III contains a core (composed of alpha, epsilon and theta chains) that associates with a tau subunit. This core dimerizes to form the POLIII' complex. PolIII' associates with the gamma complex (composed of gamma, delta, delta', psi and chi chains) and with the beta chain to form the complete DNA polymerase III complex.

It carries out the reaction DNA(n) + a 2'-deoxyribonucleoside 5'-triphosphate = DNA(n+1) + diphosphate. In terms of biological role, DNA polymerase III is a complex, multichain enzyme responsible for most of the replicative synthesis in bacteria. This DNA polymerase also exhibits 3' to 5' exonuclease activity. The sequence is that of DNA polymerase III subunit delta' (holB) from Pseudomonas aeruginosa (strain ATCC 15692 / DSM 22644 / CIP 104116 / JCM 14847 / LMG 12228 / 1C / PRS 101 / PAO1).